Consider the following 354-residue polypeptide: Adenine deaminase (354 aa).

Positions 20, 22, and 200 each coordinate Zn(2+). Glutamate 203 acts as the Proton donor in catalysis. A Zn(2+)-binding site is contributed by aspartate 281. Position 282 (aspartate 282) interacts with substrate.

It belongs to the metallo-dependent hydrolases superfamily. Adenosine and AMP deaminases family. Adenine deaminase type 2 subfamily. It depends on Zn(2+) as a cofactor.

It catalyses the reaction adenine + H2O + H(+) = hypoxanthine + NH4(+). In terms of biological role, catalyzes the hydrolytic deamination of adenine to hypoxanthine. Plays an important role in the purine salvage pathway and in nitrogen catabolism. The polypeptide is Adenine deaminase (Cupriavidus metallidurans (strain ATCC 43123 / DSM 2839 / NBRC 102507 / CH34) (Ralstonia metallidurans)).